We begin with the raw amino-acid sequence, 134 residues long: ATP synthase epsilon chain (134 aa).

This sequence belongs to the ATPase epsilon chain family. In terms of assembly, F-type ATPases have 2 components, CF(1) - the catalytic core - and CF(0) - the membrane proton channel. CF(1) has five subunits: alpha(3), beta(3), gamma(1), delta(1), epsilon(1). CF(0) has three main subunits: a, b and c.

It is found in the cellular thylakoid membrane. Functionally, produces ATP from ADP in the presence of a proton gradient across the membrane. This is ATP synthase epsilon chain from Prochlorococcus marinus (strain MIT 9312).